Reading from the N-terminus, the 593-residue chain is Alanine--tRNA ligase (593 aa).

The Zn(2+) site is built by His456, His460, Cys558, and His562.

This sequence belongs to the class-II aminoacyl-tRNA synthetase family. Zn(2+) is required as a cofactor.

It is found in the cytoplasm. The catalysed reaction is tRNA(Ala) + L-alanine + ATP = L-alanyl-tRNA(Ala) + AMP + diphosphate. Its function is as follows. Catalyzes the attachment of alanine to tRNA(Ala) in a two-step reaction: alanine is first activated by ATP to form Ala-AMP and then transferred to the acceptor end of tRNA(Ala). Also edits incorrectly charged Ser-tRNA(Ala) and Gly-tRNA(Ala) via its editing domain. The protein is Alanine--tRNA ligase (alaS) of Borrelia hermsii (strain HS1 / DAH).